The primary structure comprises 117 residues: Large ribosomal subunit protein bL19 (117 aa).

Belongs to the bacterial ribosomal protein bL19 family.

Functionally, this protein is located at the 30S-50S ribosomal subunit interface and may play a role in the structure and function of the aminoacyl-tRNA binding site. The chain is Large ribosomal subunit protein bL19 from Vibrio parahaemolyticus serotype O3:K6 (strain RIMD 2210633).